The sequence spans 347 residues: NADH-quinone oxidoreductase subunit H (347 aa).

The next 9 helical transmembrane spans lie at 13-33 (LIIA…VAYL), 50-70 (PNVV…KFVF), 82-102 (GVFL…WAVI), 115-135 (VGIL…IMGG), 161-181 (IGFV…TDIV), 198-218 (FLDW…ISAL), 248-268 (FLLF…LMTV), 286-306 (VPGI…FAMV), and 325-345 (VFLP…KVFG).

This sequence belongs to the complex I subunit 1 family. As to quaternary structure, NDH-1 is composed of 14 different subunits. Subunits NuoA, H, J, K, L, M, N constitute the membrane sector of the complex.

It localises to the cell inner membrane. The catalysed reaction is a quinone + NADH + 5 H(+)(in) = a quinol + NAD(+) + 4 H(+)(out). Functionally, NDH-1 shuttles electrons from NADH, via FMN and iron-sulfur (Fe-S) centers, to quinones in the respiratory chain. The immediate electron acceptor for the enzyme in this species is believed to be ubiquinone. Couples the redox reaction to proton translocation (for every two electrons transferred, four hydrogen ions are translocated across the cytoplasmic membrane), and thus conserves the redox energy in a proton gradient. This subunit may bind ubiquinone. This chain is NADH-quinone oxidoreductase subunit H, found in Brucella ovis (strain ATCC 25840 / 63/290 / NCTC 10512).